The chain runs to 188 residues: Inosine triphosphate pyrophosphatase (188 aa).

7-12 serves as a coordination point for ITP; it reads TGNAGK. Residue glutamate 36 coordinates Mg(2+). Residues lysine 48, 64-65, lysine 81, 140-143, lysine 163, and 168-169 each bind ITP; these read DT, FGWN, and HR.

This sequence belongs to the HAM1 NTPase family. As to quaternary structure, homodimer. It depends on Mg(2+) as a cofactor. Mn(2+) is required as a cofactor.

It localises to the cytoplasm. Its subcellular location is the nucleus. The enzyme catalyses ITP + H2O = IMP + diphosphate + H(+). It carries out the reaction dITP + H2O = dIMP + diphosphate + H(+). The catalysed reaction is XTP + H2O = XMP + diphosphate + H(+). Functionally, pyrophosphatase that hydrolyzes non-canonical purine nucleotides such as inosine triphosphate (ITP), deoxyinosine triphosphate (dITP) or xanthosine 5'-triphosphate (XTP) to their respective monophosphate derivatives. The enzyme does not distinguish between the deoxy- and ribose forms. Probably excludes non-canonical purines from RNA and DNA precursor pools, thus preventing their incorporation into RNA and DNA and avoiding chromosomal lesions. This Yarrowia lipolytica (strain CLIB 122 / E 150) (Yeast) protein is Inosine triphosphate pyrophosphatase.